The sequence spans 229 residues: Large ribosomal subunit protein uL1 (229 aa).

It belongs to the universal ribosomal protein uL1 family. In terms of assembly, part of the 50S ribosomal subunit.

In terms of biological role, binds directly to 23S rRNA. The L1 stalk is quite mobile in the ribosome, and is involved in E site tRNA release. Its function is as follows. Protein L1 is also a translational repressor protein, it controls the translation of the L11 operon by binding to its mRNA. This is Large ribosomal subunit protein uL1 from Clostridium acetobutylicum (strain ATCC 824 / DSM 792 / JCM 1419 / IAM 19013 / LMG 5710 / NBRC 13948 / NRRL B-527 / VKM B-1787 / 2291 / W).